The primary structure comprises 663 residues: Protein LNK2 (663 aa).

2 disordered regions span residues 528–549 (HYTSDTSHSNKTSQDDQEVIPR) and 590–663 (MEGP…KRKL). The segment covering 602–629 (GTEEKGNFPKCSIRETHLTKQKAQKEEG) has biased composition (basic and acidic residues). Residues 639-648 (APNSGSSSTV) show a composition bias toward polar residues.

In terms of assembly, interacts with CCA1, LHY, REV4 and REV8, but not with PRR7 or PRR9. In terms of tissue distribution, expressed in roots, stems, leaves, seedlings, cotyledons, inflorescences and siliques. Highest expression in root tips, young leaves and vasculatur tissues.

Its subcellular location is the nucleus. In terms of biological role, transcriptional coactivator necessary for expression of the clock genes PRR5 and TOC1. Antagonizes REV8 function in the regulation of anthocyanin accumulation. Involved in red light input to the clock. Activates clock-controlled genes with afternoon peak. Mediates light inhibition of hypocotyl elongation. Unable to bind to DNA, but recruited to the evening element (EE)-containing region of the PRR5 and TOC1 promoters through its interaction with the DNA binding proteins REV8 and REV4. This chain is Protein LNK2, found in Arabidopsis thaliana (Mouse-ear cress).